The primary structure comprises 512 residues: D-alanine--D-alanyl carrier protein ligase (512 aa).

Residue 152 to 153 coordinates ATP; the sequence is TS. Asp-199 is a binding site for D-alanine. Position 294 to 299 (294 to 299) interacts with ATP; that stretch reads NAYGPT. Residue Val-303 participates in D-alanine binding. ATP is bound by residues Asp-385, 397 to 400, and Lys-499; that span reads YGGR. Residue Lys-499 coordinates D-alanine.

The protein belongs to the ATP-dependent AMP-binding enzyme family. DltA subfamily.

It localises to the cytoplasm. The enzyme catalyses holo-[D-alanyl-carrier protein] + D-alanine + ATP = D-alanyl-[D-alanyl-carrier protein] + AMP + diphosphate. It functions in the pathway cell wall biogenesis; lipoteichoic acid biosynthesis. Functionally, catalyzes the first step in the D-alanylation of lipoteichoic acid (LTA), the activation of D-alanine and its transfer onto the D-alanyl carrier protein (Dcp) DltC. In an ATP-dependent two-step reaction, forms a high energy D-alanyl-AMP intermediate, followed by transfer of the D-alanyl residue as a thiol ester to the phosphopantheinyl prosthetic group of the Dcp. D-alanylation of LTA plays an important role in modulating the properties of the cell wall in Gram-positive bacteria, influencing the net charge of the cell wall. This is D-alanine--D-alanyl carrier protein ligase from Streptococcus pyogenes serotype M18 (strain MGAS8232).